The chain runs to 183 residues: uncharacterized protein (183 aa).

This is an uncharacterized protein from Homo sapiens (Human).